A 192-amino-acid polypeptide reads, in one-letter code: PBAN-type neuropeptides (192 aa).

The first 23 residues, 1–23 (MYKTNIVFNVLALALFSIFFASC), serve as a signal peptide directing secretion. A Leucine amide modification is found at L47. The propeptide occupies 51-94 (SMKPSTEDNRQTFLRLLEAADALKFYYDQLPYERQADEPETKVT). 4 positions are modified to leucine amide: L103, L122, L158, and L168. The propeptide occupies 171–192 (ELSYDYPTKYRVARSVNKTMDN).

Belongs to the pyrokinin family. As to expression, expression is restricted to the subesophageal ganglion.

The protein resides in the secreted. In terms of biological role, a hormone that controls sex pheromone production in females and pheromone responsiveness in male. Also mediates visceral muscle contractile activity (myotropic activity). Identical to MRCH which is implicated in the formation of both melanin in the cuticle and ommochrome in the epidermis of armyworm species. Its function is as follows. Diapause hormone (DH) is responsible for induction of embryonic diapause. The three SGNPS are far less active than DH in inducing diapause eggs. Beta-SGNP expressed higher pban activity than PBAN-I, but alpha- and gamma-SGNP were far less active in pheromonotropic activity. The sequence is that of PBAN-type neuropeptides from Bombyx mori (Silk moth).